The chain runs to 40 residues: Photosystem II reaction center protein J (40 aa).

A helical membrane pass occupies residues 8-28 (IPLWLIGTLTGILVIGLIGIF).

The protein belongs to the PsbJ family. In terms of assembly, PSII is composed of 1 copy each of membrane proteins PsbA, PsbB, PsbC, PsbD, PsbE, PsbF, PsbH, PsbI, PsbJ, PsbK, PsbL, PsbM, PsbT, PsbX, PsbY, PsbZ, Psb30/Ycf12, at least 3 peripheral proteins of the oxygen-evolving complex and a large number of cofactors. It forms dimeric complexes.

It localises to the plastid. It is found in the chloroplast thylakoid membrane. Its function is as follows. One of the components of the core complex of photosystem II (PSII). PSII is a light-driven water:plastoquinone oxidoreductase that uses light energy to abstract electrons from H(2)O, generating O(2) and a proton gradient subsequently used for ATP formation. It consists of a core antenna complex that captures photons, and an electron transfer chain that converts photonic excitation into a charge separation. This is Photosystem II reaction center protein J from Phalaenopsis aphrodite subsp. formosana (Moth orchid).